The sequence spans 415 residues: Serine hydroxymethyltransferase (415 aa).

(6S)-5,6,7,8-tetrahydrofolate is bound by residues Leu-117 and 121–123 (GHL). Residue Lys-226 is modified to N6-(pyridoxal phosphate)lysine.

This sequence belongs to the SHMT family. As to quaternary structure, homodimer. It depends on pyridoxal 5'-phosphate as a cofactor.

The protein resides in the cytoplasm. It catalyses the reaction (6R)-5,10-methylene-5,6,7,8-tetrahydrofolate + glycine + H2O = (6S)-5,6,7,8-tetrahydrofolate + L-serine. Its pathway is one-carbon metabolism; tetrahydrofolate interconversion. The protein operates within amino-acid biosynthesis; glycine biosynthesis; glycine from L-serine: step 1/1. Functionally, catalyzes the reversible interconversion of serine and glycine with tetrahydrofolate (THF) serving as the one-carbon carrier. This reaction serves as the major source of one-carbon groups required for the biosynthesis of purines, thymidylate, methionine, and other important biomolecules. Also exhibits THF-independent aldolase activity toward beta-hydroxyamino acids, producing glycine and aldehydes, via a retro-aldol mechanism. The polypeptide is Serine hydroxymethyltransferase (Dehalococcoides mccartyi (strain CBDB1)).